A 253-amino-acid polypeptide reads, in one-letter code: 5-oxoprolinase subunit A (253 aa).

Belongs to the LamB/PxpA family. In terms of assembly, forms a complex composed of PxpA, PxpB and PxpC.

The catalysed reaction is 5-oxo-L-proline + ATP + 2 H2O = L-glutamate + ADP + phosphate + H(+). Its function is as follows. Catalyzes the cleavage of 5-oxoproline to form L-glutamate coupled to the hydrolysis of ATP to ADP and inorganic phosphate. The sequence is that of 5-oxoprolinase subunit A from Bacillus anthracis (strain CDC 684 / NRRL 3495).